A 439-amino-acid polypeptide reads, in one-letter code: Perilipin-3 (439 aa).

Residues 1–19 are compositionally biased toward low complexity; sequence MFASETEASASSTQVTTEE. The tract at residues 1–26 is disordered; sequence MFASETEASASSTQVTTEEPVQQPSV. Lys66 is subject to N6-acetyllysine. Ser92 carries the post-translational modification Phosphoserine. Lys123 participates in a covalent cross-link: Glycyl lysine isopeptide (Lys-Gly) (interchain with G-Cter in SUMO1). Ser131 bears the Phosphoserine mark. Residue Thr175 is modified to Phosphothreonine. Residues Ser180 and Ser184 each carry the phosphoserine modification. At Thr221 the chain carries Phosphothreonine. Residues Ser222 and Ser246 each carry the phosphoserine modification. Coiled-coil stretches lie at residues 254 to 282 and 358 to 381; these read RAYEHSLGKLQHTRQRAQEALLQLSQALS and AHVKEQALQARRQVEDLQATFSGM. Phosphotyrosine is present on Tyr256.

The protein belongs to the perilipin family. As to quaternary structure, homooligomer. Interacts with M6PR (via the cytoplasmic domain). Interacts with IGF2R (via the cytoplasmic domain). In terms of processing, phosphorylation at Tyr-256 by isoform 1 of CHKA (CHKalpha2) promotes dissociation from lipid droplets: dissociation is followed by recruitment of autophagosome machinery to lipid droplets and subsequent lipid droplet lipolysis.

Its subcellular location is the lipid droplet. The protein resides in the endosome membrane. The protein localises to the cytoplasm. Functionally, structural component of lipid droplets, which is required for the formation and maintenance of lipid storage droplets. Required for the transport of mannose 6-phosphate receptors (MPR) from endosomes to the trans-Golgi network. The protein is Perilipin-3 (PLIN3) of Sus scrofa (Pig).